We begin with the raw amino-acid sequence, 285 residues long: Pantothenate synthetase (285 aa).

30–37 is a binding site for ATP; sequence MGNLHAGH. Catalysis depends on His37, which acts as the Proton donor. Residue Gln61 participates in (R)-pantoate binding. Gln61 is a binding site for beta-alanine. 149-152 contributes to the ATP binding site; the sequence is GEKD. Residue Gln155 coordinates (R)-pantoate. Residue 186-189 coordinates ATP; it reads LSSR.

It belongs to the pantothenate synthetase family. In terms of assembly, homodimer.

Its subcellular location is the cytoplasm. It carries out the reaction (R)-pantoate + beta-alanine + ATP = (R)-pantothenate + AMP + diphosphate + H(+). It participates in cofactor biosynthesis; (R)-pantothenate biosynthesis; (R)-pantothenate from (R)-pantoate and beta-alanine: step 1/1. Its function is as follows. Catalyzes the condensation of pantoate with beta-alanine in an ATP-dependent reaction via a pantoyl-adenylate intermediate. This Ectopseudomonas mendocina (strain ymp) (Pseudomonas mendocina) protein is Pantothenate synthetase.